The sequence spans 778 residues: IQ domain-containing protein E (778 aa).

Disordered stretches follow at residues 1-71 and 83-108; these read MSLG…LSSR and SSKQ…HPPS. Residues 37–49 show a composition bias toward low complexity; sequence KPPSTSPKSPYYS. A compositionally biased stretch (polar residues) spans 83-101; sequence SSKQGSVAQPPSPTLTSEH. Positions 157–323 form a coiled coil; sequence LHMQKSDVDL…DLDRMLSNSP (167 aa). At S322 the chain carries Phosphoserine. Disordered regions lie at residues 348–392, 443–462, 474–529, and 573–612; these read KKVS…EDLP, ETAR…LREE, EEAK…SEER, and LVRS…AEEN. A compositionally biased stretch (low complexity) spans 352–362; it reads SSESPKQSTSE. A coiled-coil region spans residues 398–486; sequence EEQEHLQGTV…KREEKNSFVA (89 aa). IQ domains follow at residues 553-582 and 615-644; these read LDEA…PDSR and QEEA…REIA. Over residues 581–598 the composition is skewed to low complexity; the sequence is SRSPSLPGLLSPLNQSSP. Residues 651 to 662 are compositionally biased toward polar residues; sequence TVSLTPSGSASP. Residues 651-778 are disordered; it reads TVSLTPSGSA…LPRKKSPSPF (128 aa). The residue at position 661 (S661) is a Phosphoserine. The segment covering 672 to 686 has biased composition (basic and acidic residues); the sequence is IRKELCASEELRETS. The segment covering 739-752 has biased composition (pro residues); that stretch reads PSPPELQPLSPPPV.

In terms of assembly, component of the EvC complex composed of EFCAB7, IQCE, EVC2 and EVC; built from two subcomplexes, EVC2:EVC and EFCAB7:IQCE. Interacts (via N-terminus) with EFCAB7 (via EF-hands 1 and 2); this interaction anchors the EVC-EVC2 complex in a signaling microdomain at the base of cilia and stimulates the Hedgehog (Hh) pathway. Interacts with EVC2 (via N-terminal end). Interacts with EVC.

The protein resides in the cell projection. The protein localises to the cilium membrane. In terms of biological role, component of the EvC complex that positively regulates ciliary Hedgehog (Hh) signaling. Required for proper limb morphogenesis. The sequence is that of IQ domain-containing protein E (Iqce) from Mus musculus (Mouse).